The following is a 469-amino-acid chain: Acetyl-CoA decarbonylase/synthase complex subunit beta 1 (469 aa).

Positions 189, 192, 278, and 280 each coordinate [Ni-Fe-S] cluster.

It belongs to the CdhC family. In terms of assembly, monomer. The ACDS complex is made up of alpha, epsilon, beta, gamma and delta chains with a probable stoichiometry of (alpha(2)epsilon(2))(4)-beta(8)-(gamma(1)delta(1))(8) (Potential). [Ni-Fe-S] cluster serves as cofactor.

It catalyses the reaction Co(I)-[corrinoid Fe-S protein] + acetyl-CoA + H(+) = methyl-Co(III)-[corrinoid Fe-S protein] + CO + CoA. Its pathway is one-carbon metabolism; methanogenesis from acetate. Part of a complex that catalyzes the reversible cleavage of acetyl-CoA, allowing growth on acetate as sole source of carbon and energy. The alpha-epsilon complex generates CO from CO(2), while the beta subunit (this protein) combines the CO with CoA and a methyl group to form acetyl-CoA. The methyl group, which is incorporated into acetyl-CoA, is transferred to the beta subunit by a corrinoid iron-sulfur protein (the gamma-delta complex). In Methanosarcina thermophila, this protein is Acetyl-CoA decarbonylase/synthase complex subunit beta 1 (cdhC1).